The chain runs to 277 residues: Shikimate dehydrogenase (NADP(+)) (277 aa).

Residues 15-17 (SLS) and T62 contribute to the shikimate site. K66 (proton acceptor) is an active-site residue. The shikimate site is built by N87 and D102. NADP(+)-binding positions include 127-131 (GAGGA), 151-156 (NRTVDK), and I219. Position 221 (Y221) interacts with shikimate. G242 provides a ligand contact to NADP(+).

The protein belongs to the shikimate dehydrogenase family. Homodimer.

It carries out the reaction shikimate + NADP(+) = 3-dehydroshikimate + NADPH + H(+). Its pathway is metabolic intermediate biosynthesis; chorismate biosynthesis; chorismate from D-erythrose 4-phosphate and phosphoenolpyruvate: step 4/7. Its function is as follows. Involved in the biosynthesis of the chorismate, which leads to the biosynthesis of aromatic amino acids. Catalyzes the reversible NADPH linked reduction of 3-dehydroshikimate (DHSA) to yield shikimate (SA). The sequence is that of Shikimate dehydrogenase (NADP(+)) from Bacillus cereus (strain ZK / E33L).